The sequence spans 380 residues: Cell division protein ZipA (380 aa).

Residues 1 to 7 lie on the Periplasmic side of the membrane; sequence MEDNFRN. Residues 8–28 traverse the membrane as a helical segment; that stretch reads VLIILSAIVITAIFIHGLWTL. Over 29-380 the chain is Cytoplasmic; the sequence is RKQKNPYKLK…DRKSRIALVE (352 aa).

The protein belongs to the ZipA family. As to quaternary structure, interacts with FtsZ via their C-terminal domains.

It is found in the cell inner membrane. Essential cell division protein that stabilizes the FtsZ protofilaments by cross-linking them and that serves as a cytoplasmic membrane anchor for the Z ring. Also required for the recruitment to the septal ring of downstream cell division proteins. The protein is Cell division protein ZipA of Colwellia psychrerythraea (strain 34H / ATCC BAA-681) (Vibrio psychroerythus).